Reading from the N-terminus, the 947-residue chain is Protocadherin alpha-4 (947 aa).

The signal sequence occupies residues M1 to S29. Cadherin domains follow at residues Q30–F133, P134–F242, D243–L350, E351–F455, A456–L565, and S573–R681. Topologically, residues Q30–N697 are extracellular. C96 and C102 form a disulfide bridge. N-linked (GlcNAc...) asparagine glycans are attached at residues N257 and N265. T438 is a glycosylation site (O-linked (Man) threonine). O-linked (Man) serine glycans are attached at residues S440 and S442. N-linked (GlcNAc...) asparagine glycosylation is present at N548. The helical transmembrane segment at V698–Y718 threads the bilayer. The Cytoplasmic portion of the chain corresponds to T719–Q947. 6 PXXP repeats span residues P734 to P737, P774 to S777, P796 to P799, P829 to P832, P870 to P873, and P888 to P891. A 6 X 4 AA repeats of P-X-X-P region spans residues P734–P891. The segment at V738–Q947 is required for interaction with FYN. Disordered stretches follow at residues G761–Y805 and I824–P853. The tract at residues P891–Q947 is disordered. The segment covering D906–K920 has biased composition (basic and acidic residues).

In terms of assembly, forms homodimers in trans (molecules expressed by two different cells). Forms promiscuous heterodimers in cis (at the plasma membrane of the same cell) with other protocadherins. Interacts with FYN. As to expression, detected in brain throughout embryonic development. Detected in adult brain, in particular in cerebellum and forebrain.

It localises to the cell membrane. Its function is as follows. Calcium-dependent cell-adhesion protein involved in cells self-recognition and non-self discrimination. Thereby, it is involved in the establishment and maintenance of specific neuronal connections in the brain. The protein is Protocadherin alpha-4 of Mus musculus (Mouse).